The primary structure comprises 98 residues: Large ribosomal subunit protein uL23 (98 aa).

It belongs to the universal ribosomal protein uL23 family. In terms of assembly, part of the 50S ribosomal subunit. Contacts protein L29, and trigger factor when it is bound to the ribosome.

In terms of biological role, one of the early assembly proteins it binds 23S rRNA. One of the proteins that surrounds the polypeptide exit tunnel on the outside of the ribosome. Forms the main docking site for trigger factor binding to the ribosome. The sequence is that of Large ribosomal subunit protein uL23 from Clostridium botulinum (strain Eklund 17B / Type B).